The chain runs to 353 residues: Fe(3+) ions import ATP-binding protein FbpC (353 aa).

The region spanning 9–239 (VTFQNVRKSF…PASSFIADFM (231 aa)) is the ABC transporter domain. 41 to 48 (GPSGCGKT) is a binding site for ATP.

Belongs to the ABC transporter superfamily. Fe(3+) ion importer (TC 3.A.1.10) family. The complex is composed of two ATP-binding proteins (FbpC), two transmembrane proteins (FbpB) and a solute-binding protein (FbpA).

Its subcellular location is the cell inner membrane. The enzyme catalyses Fe(3+)(out) + ATP + H2O = Fe(3+)(in) + ADP + phosphate + H(+). Functionally, part of the ABC transporter complex FbpABC involved in Fe(3+) ions import. Responsible for energy coupling to the transport system. The polypeptide is Fe(3+) ions import ATP-binding protein FbpC (Rhizobium etli (strain ATCC 51251 / DSM 11541 / JCM 21823 / NBRC 15573 / CFN 42)).